The sequence spans 406 residues: MAIEQTAITRATFDEVILPIYAPAEFIPVKGQGSRIWDQQGKEYVDFAGGIAVTALGHCHPALVNALKTQGETLWHISNVFTNEPALRLGRKLIEATFAERVVFMNSGTEANETAFKLARHYACVRHSPFKTKIIAFHNAFHGRSLFTVSVGGQPKYSDGFGPKPSDIIHVPFNDLHAVKAVMDDHTCAVVVEPIQGEGGVTAATPEFLQGLRELCDQHQALLVFDEVQCGMGRTGDLFAYMHYGVTPDILTSAKALGGGFPISAMLTTAEIASAFHPGSHGSTYGGNPLACAVAGAAFDIINTPEVLEGIQAKRQRFVDHLQKIDQQYDVFSDIRGMGLLIGAELKPQYKGQARDFLYAGAEAGVMVLNAGPDVMRFAPSLVVEDADIDEGMQRFAHAVAKVVGA.

Residues 108–109 and F141 each bind pyridoxal 5'-phosphate; that span reads GT. Residue R144 participates in N(2)-acetyl-L-ornithine binding. 226–229 lines the pyridoxal 5'-phosphate pocket; the sequence is DEVQ. Residue K255 is modified to N6-(pyridoxal phosphate)lysine. S283 serves as a coordination point for N(2)-acetyl-L-ornithine. T284 provides a ligand contact to pyridoxal 5'-phosphate.

Belongs to the class-III pyridoxal-phosphate-dependent aminotransferase family. ArgD subfamily. As to quaternary structure, homodimer. The cofactor is pyridoxal 5'-phosphate.

Its subcellular location is the cytoplasm. The catalysed reaction is N(2)-acetyl-L-ornithine + 2-oxoglutarate = N-acetyl-L-glutamate 5-semialdehyde + L-glutamate. It catalyses the reaction N-succinyl-(2S,6S)-2,6-diaminopimelate + 2-oxoglutarate = (S)-2-succinylamino-6-oxoheptanedioate + L-glutamate. Its pathway is amino-acid biosynthesis; L-arginine biosynthesis; N(2)-acetyl-L-ornithine from L-glutamate: step 4/4. It functions in the pathway amino-acid biosynthesis; L-lysine biosynthesis via DAP pathway; LL-2,6-diaminopimelate from (S)-tetrahydrodipicolinate (succinylase route): step 2/3. Its function is as follows. Involved in both the arginine and lysine biosynthetic pathways. This Escherichia coli O157:H7 protein is Acetylornithine/succinyldiaminopimelate aminotransferase.